The chain runs to 526 residues: Probable feruloyl esterase B-2 (526 aa).

An N-terminal signal peptide occupies residues 1–19 (MPSLRRLLPFLAAGSAALA). 2 disulfides stabilise this stretch: Cys28–Cys75 and Cys63–Cys114. N-linked (GlcNAc...) asparagine glycans are attached at residues Asn53, Asn85, Asn98, and Asn138. Disulfide bonds link Cys187/Cys441, Cys256/Cys273, and Cys282/Cys291. Ser188 functions as the Acyl-ester intermediate in the catalytic mechanism. The N-linked (GlcNAc...) asparagine glycan is linked to Asn246. Residues Asp257, Asp260, Ala262, Asp264, and Ile266 each contribute to the Ca(2+) site. Asn287 and Asn311 each carry an N-linked (GlcNAc...) asparagine glycan. Residues Asp400 and His440 each act as charge relay system in the active site. Residues Asn490 and Asn516 are each glycosylated (N-linked (GlcNAc...) asparagine). A disulfide bridge links Cys503 with Cys525.

It belongs to the tannase family.

The protein resides in the secreted. The enzyme catalyses feruloyl-polysaccharide + H2O = ferulate + polysaccharide.. Involved in degradation of plant cell walls. Hydrolyzes the feruloyl-arabinose ester bond in arabinoxylans as well as the feruloyl-galactose and feruloyl-arabinose ester bonds in pectin. This is Probable feruloyl esterase B-2 (faeB-2) from Aspergillus oryzae (strain ATCC 42149 / RIB 40) (Yellow koji mold).